We begin with the raw amino-acid sequence, 255 residues long: Pimeloyl-[acyl-carrier protein] methyl ester esterase (255 aa).

Residues tryptophan 18, 78–79 (SL), and 139–143 (FLALD) each bind substrate. Serine 78 functions as the Nucleophile in the catalytic mechanism. Catalysis depends on residues aspartate 203 and histidine 233. Histidine 233 contacts substrate.

It belongs to the AB hydrolase superfamily. Carboxylesterase BioH family. As to quaternary structure, monomer.

It localises to the cytoplasm. It catalyses the reaction 6-carboxyhexanoyl-[ACP] methyl ester + H2O = 6-carboxyhexanoyl-[ACP] + methanol + H(+). It functions in the pathway cofactor biosynthesis; biotin biosynthesis. Its function is as follows. The physiological role of BioH is to remove the methyl group introduced by BioC when the pimeloyl moiety is complete. It allows to synthesize pimeloyl-ACP via the fatty acid synthetic pathway through the hydrolysis of the ester bonds of pimeloyl-ACP esters. This is Pimeloyl-[acyl-carrier protein] methyl ester esterase from Xylella fastidiosa (strain 9a5c).